A 305-amino-acid chain; its full sequence is UDP-3-O-acyl-N-acetylglucosamine deacetylase (305 aa).

The Zn(2+) site is built by H79, H238, and D242. Catalysis depends on H265, which acts as the Proton donor.

Belongs to the LpxC family. It depends on Zn(2+) as a cofactor.

The catalysed reaction is a UDP-3-O-[(3R)-3-hydroxyacyl]-N-acetyl-alpha-D-glucosamine + H2O = a UDP-3-O-[(3R)-3-hydroxyacyl]-alpha-D-glucosamine + acetate. The protein operates within glycolipid biosynthesis; lipid IV(A) biosynthesis; lipid IV(A) from (3R)-3-hydroxytetradecanoyl-[acyl-carrier-protein] and UDP-N-acetyl-alpha-D-glucosamine: step 2/6. Functionally, catalyzes the hydrolysis of UDP-3-O-myristoyl-N-acetylglucosamine to form UDP-3-O-myristoylglucosamine and acetate, the committed step in lipid A biosynthesis. The chain is UDP-3-O-acyl-N-acetylglucosamine deacetylase from Sodalis glossinidius (strain morsitans).